Reading from the N-terminus, the 1162-residue chain is Glycerophosphocholine phosphodiesterase GDE1 (1162 aa).

In terms of domain architecture, SPX spans 1–155; sequence MKFGKTYVTH…TSILSQHSGV (155 aa). ANK repeat units follow at residues 346 to 375, 392 to 421, 423 to 452, 458 to 487, 492 to 521, and 525 to 554; these read YHRT…KWGL, EGLT…AQTL, CPNL…DVNY, RNET…NTEI, FGWT…SYDI, and SGWL…KLLL. One can recognise a GP-PDE domain in the interval 817 to 1146; that stretch reads TRVIGHRGLG…DSVLAVREGL (330 aa).

It belongs to the GDE1 family.

It is found in the cytoplasm. The enzyme catalyses sn-glycerol 3-phosphocholine + H2O = sn-glycerol 3-phosphate + choline + H(+). Functionally, glycerophosphocholine glycerophosphodiesterase responsible for the hydrolysis of intracellular glycerophosphocholine into glycerol-phosphate and choline. The choline is used for phosphatidyl-choline synthesis. Required for utilization of glycerophosphocholine as phosphate source. C.albicans can utilize GroPCho through transport and intracellular hydrolysis or through extracellular hydrolysis. The protein is Glycerophosphocholine phosphodiesterase GDE1 of Candida albicans (strain SC5314 / ATCC MYA-2876) (Yeast).